Reading from the N-terminus, the 316-residue chain is F-box protein At4g09920 (316 aa).

The F-box domain maps to 1 to 47; it reads MDRIIGLPDEVLVKILSFVPTKVAVSTSILSKRWEFLWMWLTKLKFG.

This is F-box protein At4g09920 from Arabidopsis thaliana (Mouse-ear cress).